Consider the following 496-residue polypeptide: Lysine--tRNA ligase (496 aa).

Residues Glu409 and Glu416 each contribute to the Mg(2+) site.

This sequence belongs to the class-II aminoacyl-tRNA synthetase family. As to quaternary structure, homodimer. The cofactor is Mg(2+).

The protein resides in the cytoplasm. It carries out the reaction tRNA(Lys) + L-lysine + ATP = L-lysyl-tRNA(Lys) + AMP + diphosphate. In Streptococcus thermophilus (strain ATCC BAA-491 / LMD-9), this protein is Lysine--tRNA ligase.